Here is a 546-residue protein sequence, read N- to C-terminus: Peptidoglycan transport ATP-binding protein YejF (546 aa).

ABC transporter domains are found at residues 12–261 and 291–530; these read VRDL…RHLL and IKAG…KALL. Residues 46–53 and 323–330 contribute to the ATP site; these read GESGSGKS and GESGSGKT.

The protein belongs to the ABC transporter superfamily. The complex is composed of one ATP-binding protein (YejF), two transmembrane proteins (YejB and YejE) and a solute-binding protein (YepA or YejA).

The protein localises to the cell inner membrane. Its function is as follows. Part of the ABC transporter complex YejBEF-YepA involved in the uptake of muropeptides, the breakdown products of cell wall peptidoglycan. The import of muropeptides into the cell enables peptidoglycan recycling, which is vital for cell wall integrity in this bacterium. Is also probably part of the ABC transporter complex YejABEF, which is likely involved in broad-spectrum peptide import. Responsible for energy coupling to the transport system. The chain is Peptidoglycan transport ATP-binding protein YejF from Agrobacterium fabrum (strain C58 / ATCC 33970) (Agrobacterium tumefaciens (strain C58)).